The primary structure comprises 520 residues: Putative cytochrome P450 CYP13A3 (520 aa).

Residue C464 participates in heme binding.

This sequence belongs to the cytochrome P450 family. It depends on heme as a cofactor.

Its function is as follows. Cytochromes P450 are a group of heme-thiolate monooxygenases. They oxidize a variety of structurally unrelated compounds, including steroids, fatty acids, and xenobiotics. This is Putative cytochrome P450 CYP13A3 (cyp-13A3) from Caenorhabditis elegans.